A 258-amino-acid chain; its full sequence is Synapse differentiation-inducing gene protein 1 (258 aa).

Over 1–181 (MDGIVEQKSV…NFLMMPPRDH (181 aa)) the chain is Cytoplasmic. Serine 137 carries the post-translational modification Phosphoserine. The chain crosses the membrane as a helical span at residues 182–202 (LGLSVFSMLCCFWPLGIAAFY). The Extracellular portion of the chain corresponds to 203-228 (LSHETNKAVAKGDFHQASTSSRRALF). Positions 229 to 249 (LAVLSITIGTGIYVGVAVALI) form an intramembrane region, helical. Topologically, residues 250–258 (AYLSKNNHL) are extracellular.

The protein belongs to the CD225/Dispanin family. In terms of assembly, homodimer. Interacts with GRIA1 and GRIA2. As to expression, enriched in the cerebellum and also expressed in the neocortex and modestly in the hippocampus (at protein level). Expressed in hippocampal neurons, both in cell body and neurites, however its presence is enriched at excitatory synapses and also found in postsynaptic cells.

Its subcellular location is the cell membrane. The protein localises to the early endosome membrane. The protein resides in the postsynaptic density membrane. It is found in the synapse. It localises to the cell projection. Its subcellular location is the dendrite. The protein localises to the dendritic spine. Its function is as follows. May regulate AMPA receptor content at nascent synapses, and have a role in postsynaptic development and maturation. This Rattus norvegicus (Rat) protein is Synapse differentiation-inducing gene protein 1 (Syndig1).